Here is a 285-residue protein sequence, read N- to C-terminus: Release factor glutamine methyltransferase (285 aa).

S-adenosyl-L-methionine is bound by residues 119 to 123 (GTGSG), Glu142, Trp175, and Asn191. 191–194 (NPPY) serves as a coordination point for substrate.

The protein belongs to the protein N5-glutamine methyltransferase family. PrmC subfamily.

The catalysed reaction is L-glutaminyl-[peptide chain release factor] + S-adenosyl-L-methionine = N(5)-methyl-L-glutaminyl-[peptide chain release factor] + S-adenosyl-L-homocysteine + H(+). Its function is as follows. Methylates the class 1 translation termination release factors RF1/PrfA and RF2/PrfB on the glutamine residue of the universally conserved GGQ motif. The chain is Release factor glutamine methyltransferase from Burkholderia pseudomallei (strain K96243).